We begin with the raw amino-acid sequence, 142 residues long: Small ribosomal subunit protein uS12 (142 aa).

Belongs to the universal ribosomal protein uS12 family. Part of the 30S ribosomal subunit.

In terms of biological role, with S4 and S5 plays an important role in translational accuracy. Located at the interface of the 30S and 50S subunits. The sequence is that of Small ribosomal subunit protein uS12 from Thermoplasma volcanium (strain ATCC 51530 / DSM 4299 / JCM 9571 / NBRC 15438 / GSS1).